We begin with the raw amino-acid sequence, 546 residues long: Chaperonin GroEL (546 aa).

ATP is bound by residues 30 to 33 (TLGP), Lys-51, 87 to 91 (DGTTT), Gly-415, 479 to 481 (NAA), and Asp-495.

Belongs to the chaperonin (HSP60) family. Forms a cylinder of 14 subunits composed of two heptameric rings stacked back-to-back. Interacts with the co-chaperonin GroES.

It localises to the cytoplasm. The catalysed reaction is ATP + H2O + a folded polypeptide = ADP + phosphate + an unfolded polypeptide.. In terms of biological role, together with its co-chaperonin GroES, plays an essential role in assisting protein folding. The GroEL-GroES system forms a nano-cage that allows encapsulation of the non-native substrate proteins and provides a physical environment optimized to promote and accelerate protein folding. This Allochromatium vinosum (Chromatium vinosum) protein is Chaperonin GroEL.